We begin with the raw amino-acid sequence, 293 residues long: Small ribosomal subunit biogenesis GTPase RsgA (293 aa).

Residues 63–223 (QNELVRPPIA…VADTPGFSAL (161 aa)) enclose the CP-type G domain. GTP is bound by residues 112 to 115 (SKID) and 166 to 174 (GQSGVGKSS). Zn(2+) is bound by residues Cys247, Cys252, His254, and Cys260.

It belongs to the TRAFAC class YlqF/YawG GTPase family. RsgA subfamily. In terms of assembly, monomer. Associates with 30S ribosomal subunit, binds 16S rRNA. Requires Zn(2+) as cofactor.

The protein localises to the cytoplasm. Functionally, one of several proteins that assist in the late maturation steps of the functional core of the 30S ribosomal subunit. Helps release RbfA from mature subunits. May play a role in the assembly of ribosomal proteins into the subunit. Circularly permuted GTPase that catalyzes slow GTP hydrolysis, GTPase activity is stimulated by the 30S ribosomal subunit. This chain is Small ribosomal subunit biogenesis GTPase RsgA, found in Geobacillus kaustophilus (strain HTA426).